The chain runs to 532 residues: Flavin-containing monooxygenase 1 (532 aa).

Ala2 carries the N-acetylalanine modification. The Lumenal segment spans residues 2-510 (AKRVAIVGAG…TRIVKESPSP (509 aa)). FAD is bound by residues 9 to 13 (GAGVS), Glu32, 40 to 41 (LW), and 61 to 62 (NS). 60 to 61 (SN) contributes to the NADP(+) binding site. A glycan (N-linked (GlcNAc...) (high mannose) asparagine) is linked at Asn120. 195 to 198 (SGTD) contacts NADP(+). A helical transmembrane segment spans residues 511 to 531 (FASLLKLFSFLALLVAIFQIF). A topological domain (cytoplasmic) is located at residue Leu532.

This sequence belongs to the FMO family. FAD is required as a cofactor. As to expression, liver.

The protein resides in the endoplasmic reticulum membrane. The enzyme catalyses hypotaurine + NADPH + O2 + H(+) = taurine + NADP(+) + H2O. It catalyses the reaction hypotaurine + NADH + O2 + H(+) = taurine + NAD(+) + H2O. The catalysed reaction is trimethylamine + NADPH + O2 = trimethylamine N-oxide + NADP(+) + H2O. It carries out the reaction N,N-dimethylaniline + NADPH + O2 + H(+) = N,N-dimethylaniline N-oxide + NADP(+) + H2O. In terms of biological role, broad spectrum monooxygenase that catalyzes the oxygenation of a wide variety of nitrogen- and sulfur-containing compounds including xenobiotics. Catalyzes the S-oxygenation of hypotaurine to produce taurine, an organic osmolyte involved in cell volume regulation as well as a variety of cytoprotective and developmental processes. In vitro, catalyzes the N-oxygenation of trimethylamine (TMA) to produce trimethylamine N-oxide (TMAO) and could therefore participate to the detoxification of this compound that is generated by the action of gut microbiota from dietary precursors such as choline, choline containing compounds, betaine or L-carnitine. The polypeptide is Flavin-containing monooxygenase 1 (FMO1) (Sus scrofa (Pig)).